Here is a 152-residue protein sequence, read N- to C-terminus: Large ribosomal subunit protein uL13 (152 aa).

It belongs to the universal ribosomal protein uL13 family. In terms of assembly, part of the 50S ribosomal subunit.

Functionally, this protein is one of the early assembly proteins of the 50S ribosomal subunit, although it is not seen to bind rRNA by itself. It is important during the early stages of 50S assembly. This chain is Large ribosomal subunit protein uL13, found in Neorickettsia sennetsu (strain ATCC VR-367 / Miyayama) (Ehrlichia sennetsu).